An 86-amino-acid polypeptide reads, in one-letter code: Progonadoliberin-2 (86 aa).

The first 24 residues, methionine 1 to serine 24, serve as a signal peptide directing secretion. Glutamine 25 is modified (pyrrolidone carboxylic acid). The residue at position 34 (glycine 34) is a Glycine amide.

It belongs to the GnRH family.

The protein localises to the secreted. Functionally, stimulates the secretion of gonadotropins. The chain is Progonadoliberin-2 (gnrh2) from Clarias gariepinus (North African catfish).